Reading from the N-terminus, the 397-residue chain is G2/mitotic-specific cyclin-B1 (397 aa).

Positions 1-17 (MALRVTRNTRLASSENQ) are enriched in polar residues. Residues 1-30 (MALRVTRNTRLASSENQGALPGKAAVANKP) are disordered.

It belongs to the cyclin family. Cyclin AB subfamily. As to quaternary structure, interacts with the CDK1 protein kinase to form a serine/threonine kinase holoenzyme complex also known as maturation promoting factor (MPF). The cyclin subunit imparts substrate specificity to the complex.

Essential for the control of the cell cycle at the G2/M (mitosis) transition. The protein is G2/mitotic-specific cyclin-B1 (ccnb1) of Carassius auratus (Goldfish).